Reading from the N-terminus, the 1409-residue chain is Copia protein (1409 aa).

Residues 230–247 (VKCHHCGREGHIKKDCFH) form a CCHC-type zinc finger. Residue D292 is the For protease activity of the active site. The region spanning 476–644 (HIKRPLFVVH…TPYEMWHNKK (169 aa)) is the Integrase catalytic domain. Disordered stretches follow at residues 760–780 (SKESENKNFPNDSRKIIQTEF) and 805–851 (NESK…NDGI). A compositionally biased stretch (basic and acidic residues) spans 827 to 841 (ESRESETAEHLKEIG).

The sequence is that of Copia protein (GIP) from Drosophila melanogaster (Fruit fly).